Consider the following 643-residue polypeptide: Threonine--tRNA ligase (643 aa).

Residues 1–62 (MSFSVTLPDG…DEDVEAAIIT (62 aa)) form the TGS domain. The catalytic stretch occupies residues 239 to 537 (DHRTIGRDLD…LTEIYKGAFP (299 aa)). Residues Cys-333, His-384, and His-514 each coordinate Zn(2+).

It belongs to the class-II aminoacyl-tRNA synthetase family. In terms of assembly, homodimer. The cofactor is Zn(2+).

The protein resides in the cytoplasm. It catalyses the reaction tRNA(Thr) + L-threonine + ATP = L-threonyl-tRNA(Thr) + AMP + diphosphate + H(+). Its function is as follows. Catalyzes the attachment of threonine to tRNA(Thr) in a two-step reaction: L-threonine is first activated by ATP to form Thr-AMP and then transferred to the acceptor end of tRNA(Thr). Also edits incorrectly charged L-seryl-tRNA(Thr). In Lactobacillus gasseri (strain ATCC 33323 / DSM 20243 / BCRC 14619 / CIP 102991 / JCM 1131 / KCTC 3163 / NCIMB 11718 / NCTC 13722 / AM63), this protein is Threonine--tRNA ligase.